A 98-amino-acid chain; its full sequence is NADH-ubiquinone oxidoreductase chain 4L (98 aa).

The next 3 helical transmembrane spans lie at M1–V21, L26–L46, and I61–I81.

Belongs to the complex I subunit 4L family. As to quaternary structure, core subunit of respiratory chain NADH dehydrogenase (Complex I) which is composed of 45 different subunits.

It localises to the mitochondrion inner membrane. The enzyme catalyses a ubiquinone + NADH + 5 H(+)(in) = a ubiquinol + NAD(+) + 4 H(+)(out). In terms of biological role, core subunit of the mitochondrial membrane respiratory chain NADH dehydrogenase (Complex I) which catalyzes electron transfer from NADH through the respiratory chain, using ubiquinone as an electron acceptor. Part of the enzyme membrane arm which is embedded in the lipid bilayer and involved in proton translocation. The polypeptide is NADH-ubiquinone oxidoreductase chain 4L (MT-ND4L) (Chlorocebus sabaeus (Green monkey)).